We begin with the raw amino-acid sequence, 155 residues long: FUN14 domain-containing protein 1 (155 aa).

At 1–47 (MASRNPPPQDYESDDESYEVLDLTEYARRHHWWNRVFGHSSGPMVEK) the chain is on the cytoplasmic side. Phosphoserine occurs at positions 13 and 17. Position 18 is a phosphotyrosine; by SRC (Y18). The short motif at 18 to 21 (YEVL) is the YXXL element. Residues 48-68 (YSVATQIVMGGVTGWCAGFLF) traverse the membrane as a helical segment. Residues 69 to 74 (QKVGKL) lie on the Mitochondrial intermembrane side of the membrane. Residues 75–95 (AATAVGGGFLLLQVASHSGYV) form a helical membrane-spanning segment. Residues 96-133 (QIDWKRVEKDVNKAKRQIKKRANKAAPEINNIIEEATD) lie on the Cytoplasmic side of the membrane. K119 is covalently cross-linked (Glycyl lysine isopeptide (Lys-Gly) (interchain with G-Cter in ubiquitin)). The chain crosses the membrane as a helical span at residues 134 to 154 (FIKQNIVISSGFVGGFLLGLA). Position 155 (S155) is a topological domain, mitochondrial intermembrane.

The protein belongs to the FUN14 family. Interacts (via YXXL motif) with MAP1 LC3 family proteins MAP1LC3A, MAP1LC3B and GABARAP. Interacts with DNM1L/DPR1. Interacts with GPX4. Phosphorylation at Ser-13 by CK2 and at Tyr-18 by SRC inhibits activation of mitophagy. Following hypoxia, dephosphorylated at Tyr-18, leading to interaction with MAP1 LC3 family proteins and triggering mitophagy. Dephosphorylation is mediated by PGAM5. Phosphorylated by ULK1 at Ser-17 which enhances FUNDC1 binding to LC3. Post-translationally, ubiquitinated on Lys-119. Deubiquitinated by USP19; leading to hypoxia-induced DRP1 oligomerization and GTPase activity.

It is found in the mitochondrion outer membrane. In terms of biological role, integral mitochondrial outer-membrane protein that mediates the formation of mitochondria-associated endoplasmic reticulum membranes (MAMs). In turn, mediates angiogenesis and neoangiogenesis through interference with intracellular Ca(2+) communication and regulation of the vascular endothelial growth factor receptor KDR/VEGFR2 expression at both mRNA and protein levels. Also acts as an activator of hypoxia-induced mitophagy, an important mechanism for mitochondrial quality and homeostasis, by interacting with and recruiting LC3 protein family to mitochondria. Mechanistically, recruits DRP1 at ER-mitochondria contact sites leading to DRP1 oligomerization and GTPase activity to facilitate mitochondrial fission during hypoxia. Additionally, plays a role in hepatic ferroptosis by interacting directly with glutathione peroxidase/GPX4 to facilitate its recruitment into mitochondria through TOM/TIM complex where it is degraded by mitophagy. This is FUN14 domain-containing protein 1 (Fundc1) from Mus musculus (Mouse).